The sequence spans 447 residues: Argininosuccinate synthase (447 aa).

Residues 17–25 (AFSGGLDTS) and A43 each bind ATP. Residue Y99 participates in L-citrulline binding. ATP contacts are provided by G129 and T131. L-aspartate contacts are provided by T131, N135, and D136. Position 135 (N135) interacts with L-citrulline. D136 contacts ATP. R139 and S192 together coordinate L-citrulline. An ATP-binding site is contributed by D194. Residues T201, E203, and E280 each coordinate L-citrulline.

This sequence belongs to the argininosuccinate synthase family. Type 2 subfamily. As to quaternary structure, homotetramer.

Its subcellular location is the cytoplasm. The catalysed reaction is L-citrulline + L-aspartate + ATP = 2-(N(omega)-L-arginino)succinate + AMP + diphosphate + H(+). It participates in amino-acid biosynthesis; L-arginine biosynthesis; L-arginine from L-ornithine and carbamoyl phosphate: step 2/3. The polypeptide is Argininosuccinate synthase (Shigella flexneri serotype 5b (strain 8401)).